Here is a 124-residue protein sequence, read N- to C-terminus: Meiotically up-regulated gene 103 protein (124 aa).

It is found in the nucleus. It localises to the nucleolus. Has a role in meiosis. The polypeptide is Meiotically up-regulated gene 103 protein (mug103) (Schizosaccharomyces pombe (strain 972 / ATCC 24843) (Fission yeast)).